A 142-amino-acid chain; its full sequence is Large ribosomal subunit protein uL24 (142 aa).

The segment covering 1–11 (MKVNPFVSSDS) has biased composition (polar residues). The segment at 1–24 (MKVNPFVSSDSGKSRKAHFNAPSH) is disordered.

Belongs to the universal ribosomal protein uL24 family.

This chain is Large ribosomal subunit protein uL24 (rpl-26), found in Caenorhabditis elegans.